A 323-amino-acid chain; its full sequence is uncharacterized protein (323 aa).

Transmembrane regions (helical) follow at residues 232–252 and 267–287; these read LASY…FIVL and SLIV…GVIG.

This sequence belongs to the glycosyltransferase 2 family. GtrB subfamily.

It is found in the cell membrane. This is an uncharacterized protein from Bacillus subtilis (strain 168).